The primary structure comprises 162 residues: NADH-quinone oxidoreductase subunit I (162 aa).

2 consecutive 4Fe-4S ferredoxin-type domains span residues 53-83 and 93-122; these read LRRY…IESE and TRYD…ETHI. Positions 63, 66, 69, 73, 102, 105, 108, and 112 each coordinate [4Fe-4S] cluster.

It belongs to the complex I 23 kDa subunit family. NDH-1 is composed of 14 different subunits. Subunits NuoA, H, J, K, L, M, N constitute the membrane sector of the complex. The cofactor is [4Fe-4S] cluster.

The protein resides in the cell inner membrane. The enzyme catalyses a quinone + NADH + 5 H(+)(in) = a quinol + NAD(+) + 4 H(+)(out). Functionally, NDH-1 shuttles electrons from NADH, via FMN and iron-sulfur (Fe-S) centers, to quinones in the respiratory chain. The immediate electron acceptor for the enzyme in this species is believed to be ubiquinone. Couples the redox reaction to proton translocation (for every two electrons transferred, four hydrogen ions are translocated across the cytoplasmic membrane), and thus conserves the redox energy in a proton gradient. This Bordetella bronchiseptica (strain ATCC BAA-588 / NCTC 13252 / RB50) (Alcaligenes bronchisepticus) protein is NADH-quinone oxidoreductase subunit I.